Consider the following 368-residue polypeptide: MADAQNISLDSPGSVGAVAVPVVFALIFLLGTVGNGLVLAVLLQPGPSAWQEPGSTTDLFILNLAVADLCFILCCVPFQATIYTLDAWLFGALVCKAVHLLIYLTMYASSFTLAAVSVDRYLAVRHPLRSRALRTPRNARAAVGLVWLLAALFSAPYLSYYGTVRYGALELCVPAWEDARRRALDVATFAAGYLLPVAVVSLAYGRTLRFLWAAVGPAGAAAAEARRRATGRAGRAMLAVAALYALCWGPHHALILCFWYGRFAFSPATYACRLASHCLAYANSCLNPLVYALASRHFRARFRRLWPCGRRRRHRARRALRRVRPASSGPPGCPGDARPSGRLLAGGGQGPEPREGPVHGGEAARGPE.

Over 1-20 (MADAQNISLDSPGSVGAVAV) the chain is Extracellular. An N-linked (GlcNAc...) asparagine glycan is attached at asparagine 6. The helical transmembrane segment at 21-41 (PVVFALIFLLGTVGNGLVLAV) threads the bilayer. At 42-57 (LLQPGPSAWQEPGSTT) the chain is on the cytoplasmic side. Residues 58 to 78 (DLFILNLAVADLCFILCCVPF) form a helical membrane-spanning segment. Topologically, residues 79–96 (QATIYTLDAWLFGALVCK) are extracellular. Cysteine 95 and cysteine 172 are oxidised to a cystine. Residues 97–118 (AVHLLIYLTMYASSFTLAAVSV) form a helical membrane-spanning segment. Residues 119–138 (DRYLAVRHPLRSRALRTPRN) lie on the Cytoplasmic side of the membrane. A helical transmembrane segment spans residues 139-159 (ARAAVGLVWLLAALFSAPYLS). Over 160–184 (YYGTVRYGALELCVPAWEDARRRAL) the chain is Extracellular. The chain crosses the membrane as a helical span at residues 185 to 205 (DVATFAAGYLLPVAVVSLAYG). Over 206 to 236 (RTLRFLWAAVGPAGAAAAEARRRATGRAGRA) the chain is Cytoplasmic. A helical transmembrane segment spans residues 237–257 (MLAVAALYALCWGPHHALILC). Residues 258–259 (FW) lie on the Extracellular side of the membrane. Residues 260–280 (YGRFAFSPATYACRLASHCLA) traverse the membrane as a helical segment. Residues 281–368 (YANSCLNPLV…HGGEAARGPE (88 aa)) lie on the Cytoplasmic side of the membrane. A lipid anchor (S-palmitoyl cysteine) is attached at cysteine 308. A disordered region spans residues 317 to 368 (RRALRRVRPASSGPPGCPGDARPSGRLLAGGGQGPEPREGPVHGGEAARGPE).

Belongs to the G-protein coupled receptor 1 family.

Its subcellular location is the cell membrane. Functionally, receptor for the hormone galanin. Receptor for the hormone spexin-1. The chain is Galanin receptor type 3 (GALR3) from Homo sapiens (Human).